Consider the following 129-residue polypeptide: Fluoride-specific ion channel FluC (129 aa).

The next 4 helical transmembrane spans lie at Leu5–Val25, Ala32–Met52, Leu60–Phe80, and Ala99–Ile119. Gly75 and Thr78 together coordinate Na(+).

The protein belongs to the fluoride channel Fluc/FEX (TC 1.A.43) family.

Its subcellular location is the cell inner membrane. The enzyme catalyses fluoride(in) = fluoride(out). With respect to regulation, na(+) is not transported, but it plays an essential structural role and its presence is essential for fluoride channel function. Functionally, fluoride-specific ion channel. Important for reducing fluoride concentration in the cell, thus reducing its toxicity. The chain is Fluoride-specific ion channel FluC from Pelobacter propionicus (strain DSM 2379 / NBRC 103807 / OttBd1).